A 297-amino-acid chain; its full sequence is Carbamate kinase (297 aa).

The protein belongs to the carbamate kinase family.

The protein resides in the cytoplasm. It catalyses the reaction hydrogencarbonate + NH4(+) + ATP = carbamoyl phosphate + ADP + H2O + H(+). It carries out the reaction carbamate + ATP = carbamoyl phosphate + ADP. The catalysed reaction is hydrogencarbonate + NH4(+) = carbamate + H2O + H(+). It participates in nitrogen metabolism; (S)-allantoin degradation. Kinase involved in the anaerobic nitrogen utilization via the assimilation of allantoin. Catalyzes the transfer of a phosphate group from carbamoyl phosphate to ADP to produce ATP and leave carbamate, which spontaneously hydrolyzes to ammonia and hydrogencarbonate. This chain is Carbamate kinase, found in Escherichia coli O157:H7.